A 76-amino-acid polypeptide reads, in one-letter code: MRTFALLTAMLLLVALHAQAEARQARADEAAAQQQPGADDQGMAHSFTWPENAALPLSESAKGLRCVCTRGFCRLL.

The first 22 residues, 1–22 (MRTFALLTAMLLLVALHAQAEA), serve as a signal peptide directing secretion. The propeptide occupies 23–64 (RQARADEAAAQQQPGADDQGMAHSFTWPENAALPLSESAKGL). Positions 25–45 (ARADEAAAQQQPGADDQGMAH) are disordered. Low complexity predominate over residues 30 to 44 (AAAQQQPGADDQGMA). Residue arginine 65 forms a Cyclopeptide (Arg-Cys) (interchain with C-73 in subunit A); in form BTD-3 linkage. Residue arginine 65 forms a Cyclopeptide (Arg-Cys) (interchain with C-73 in subunit B); in form BTD-1 linkage. A Cyclopeptide (Arg-Cys) (interchain with C-73 in subunit C); in form BTD-4 cross-link involves residue arginine 65. Arginine 65 is covalently cross-linked (Cyclopeptide (Arg-Cys) (interchain with C-73 in subunit D); in form BTD-7). Residues cysteine 68 and cysteine 73 are joined by a disulfide bond. Cysteine 73 participates in a covalent cross-link: Cyclopeptide (Cys-Arg) (interchain with R-65 in subunit A); in form BTD-3. Cysteine 73 is covalently cross-linked (Cyclopeptide (Cys-Arg) (interchain with R-65 in subunit B); in form BTD-1). Residue cysteine 73 forms a Cyclopeptide (Cys-Arg) (interchain with R-65 in subunit C); in form BTD-4 linkage. A Cyclopeptide (Cys-Arg) (interchain with R-65 in subunit D); in form BTD-7 cross-link involves residue cysteine 73. The propeptide occupies 74–76 (RLL).

It belongs to the alpha-defensin family. Theta subfamily. As to quaternary structure, BTD-1 is a cyclic heterodimer composed of subunits A and B; disulfide-linked. BTD-3 is a cyclic homodimer composed of two subunits A; disulfide-linked. BTD-4 is a cyclic heterodimer composed of subunits A and C; disulfide-linked. BTD-7 is a cyclic heterodimer composed of subunits A and D; disulfide-linked. In terms of processing, forms a cyclic peptide with subunit B (BTD-1), subunit A (BTD-3), subunit C (BTD-4), or subunit D (BTD-7). An additional intersubunit disulfide bond is formed.

Functionally, BTD-1, BTD-3, BTD-4 and BTD-7 have antimicrobial activity against the Gram-negative bacterium E.coli ML35, the Gram-positive bacterium S.aureus 502a, and the fungus C.albicans 16820. BTD-3 is more effective against E.coli than BTD-1, BTD-4 and BTD-7. The polypeptide is Theta defensin subunit A (BTDA) (Papio anubis (Olive baboon)).